We begin with the raw amino-acid sequence, 86 residues long: Small ribosomal subunit protein bS16 (86 aa).

It belongs to the bacterial ribosomal protein bS16 family.

This chain is Small ribosomal subunit protein bS16, found in Stenotrophomonas maltophilia (strain R551-3).